A 246-amino-acid polypeptide reads, in one-letter code: Probable transcriptional regulatory protein APJL_1171 (246 aa).

This sequence belongs to the TACO1 family.

The protein localises to the cytoplasm. In Actinobacillus pleuropneumoniae serotype 3 (strain JL03), this protein is Probable transcriptional regulatory protein APJL_1171.